The sequence spans 147 residues: Prefoldin subunit alpha (147 aa).

This sequence belongs to the prefoldin alpha subunit family. In terms of assembly, heterohexamer of two alpha and four beta subunits.

It localises to the cytoplasm. Functionally, molecular chaperone capable of stabilizing a range of proteins. Seems to fulfill an ATP-independent, HSP70-like function in archaeal de novo protein folding. This chain is Prefoldin subunit alpha, found in Methanocorpusculum labreanum (strain ATCC 43576 / DSM 4855 / Z).